Reading from the N-terminus, the 278-residue chain is 4-deoxy-L-threo-5-hexosulose-uronate ketol-isomerase (278 aa).

Positions 196, 198, 203, and 245 each coordinate Zn(2+).

This sequence belongs to the KduI family. Zn(2+) is required as a cofactor.

It carries out the reaction 5-dehydro-4-deoxy-D-glucuronate = 3-deoxy-D-glycero-2,5-hexodiulosonate. The protein operates within glycan metabolism; pectin degradation; 2-dehydro-3-deoxy-D-gluconate from pectin: step 4/5. Functionally, catalyzes the isomerization of 5-dehydro-4-deoxy-D-glucuronate to 3-deoxy-D-glycero-2,5-hexodiulosonate. In Yersinia pseudotuberculosis serotype O:1b (strain IP 31758), this protein is 4-deoxy-L-threo-5-hexosulose-uronate ketol-isomerase.